A 455-amino-acid polypeptide reads, in one-letter code: Argininosuccinate lyase (455 aa).

Belongs to the lyase 1 family. Argininosuccinate lyase subfamily.

It localises to the cytoplasm. It catalyses the reaction 2-(N(omega)-L-arginino)succinate = fumarate + L-arginine. The protein operates within amino-acid biosynthesis; L-arginine biosynthesis; L-arginine from L-ornithine and carbamoyl phosphate: step 3/3. This Roseiflexus castenholzii (strain DSM 13941 / HLO8) protein is Argininosuccinate lyase.